Here is a 412-residue protein sequence, read N- to C-terminus: Inositol polyphosphate-5-phosphatase A (412 aa).

Cys-409 is lipidated: S-farnesyl cysteine. Positions Val-410–Gln-412 are cleaved as a propeptide — removed in mature form.

Belongs to the inositol 1,4,5-trisphosphate 5-phosphatase type I family. Interacts with TASOR. Post-translationally, isoprenylation at Cys-409 is required for localization at the membrane.

It localises to the cell membrane. The protein resides in the cell projection. The protein localises to the dendrite. It catalyses the reaction 1D-myo-inositol 1,4,5-trisphosphate + H2O = 1D-myo-inositol 1,4-bisphosphate + phosphate. The enzyme catalyses 1D-myo-inositol 1,3,4,5-tetrakisphosphate + H2O = 1D-myo-inositol 1,3,4-trisphosphate + phosphate. With respect to regulation, inhibited by EDTA and 2,3-bisphosphoglycerate. In terms of biological role, phosphatase that specifically hydrolyzes the 5-phosphate of inositol 1,4,5-trisphosphate to inositol 1,4-bisphosphate, and inositol 1,3,4,5-tetrasphosphate to inositol 1,3,4-trisphosphate. Plays a crucial role in the survival of cerebellar Purkinje cells. In Canis lupus familiaris (Dog), this protein is Inositol polyphosphate-5-phosphatase A (INPP5A).